We begin with the raw amino-acid sequence, 389 residues long: S-adenosylmethionine synthase (389 aa).

Histidine 15 contributes to the ATP binding site. Aspartate 17 is a Mg(2+) binding site. Glutamate 43 provides a ligand contact to K(+). L-methionine contacts are provided by glutamate 56 and glutamine 99. Positions 99–109 are flexible loop; it reads QSPDIAQGVNE. ATP is bound by residues 166–168, 234–235, aspartate 243, 249–250, alanine 266, and lysine 270; these read DAK, RF, and RK. Position 243 (aspartate 243) interacts with L-methionine. Residue lysine 274 coordinates L-methionine.

The protein belongs to the AdoMet synthase family. In terms of assembly, homotetramer; dimer of dimers. It depends on Mg(2+) as a cofactor. Requires K(+) as cofactor.

It is found in the cytoplasm. It catalyses the reaction L-methionine + ATP + H2O = S-adenosyl-L-methionine + phosphate + diphosphate. The protein operates within amino-acid biosynthesis; S-adenosyl-L-methionine biosynthesis; S-adenosyl-L-methionine from L-methionine: step 1/1. In terms of biological role, catalyzes the formation of S-adenosylmethionine (AdoMet) from methionine and ATP. The overall synthetic reaction is composed of two sequential steps, AdoMet formation and the subsequent tripolyphosphate hydrolysis which occurs prior to release of AdoMet from the enzyme. The protein is S-adenosylmethionine synthase of Laribacter hongkongensis (strain HLHK9).